Here is an 859-residue protein sequence, read N- to C-terminus: DNA mismatch repair protein MutS (859 aa).

ATP is bound at residue 614 to 621 (GPNMGGKS).

The protein belongs to the DNA mismatch repair MutS family.

This protein is involved in the repair of mismatches in DNA. It is possible that it carries out the mismatch recognition step. This protein has a weak ATPase activity. This chain is DNA mismatch repair protein MutS, found in Histophilus somni (strain 2336) (Haemophilus somnus).